We begin with the raw amino-acid sequence, 500 residues long: Lysine--tRNA ligase (500 aa).

The Mg(2+) site is built by glutamate 402 and glutamate 409.

The protein belongs to the class-II aminoacyl-tRNA synthetase family. In terms of assembly, homodimer. Mg(2+) is required as a cofactor.

Its subcellular location is the cytoplasm. The catalysed reaction is tRNA(Lys) + L-lysine + ATP = L-lysyl-tRNA(Lys) + AMP + diphosphate. The sequence is that of Lysine--tRNA ligase from Buchnera aphidicola subsp. Baizongia pistaciae (strain Bp).